The following is a 318-amino-acid chain: Protoheme IX farnesyltransferase (318 aa).

A run of 9 helical transmembrane segments spans residues 37 to 57 (LVIFTALVGIAVAPGGIHPVI), 58 to 78 (AFTALLCIAVGAGASGALNMW), 100 to 120 (VTAREAAVFGSILSVFAVMTM), 122 to 142 (VLVNWVAAALLAFTIFFYLVV), 155 to 175 (IVIGGAAGAFPPMIGWAAVTG), 182 to 202 (FVLFLIIFMWTPPHFWALALY), 228 to 248 (IMLYSLALVPVTLLPGFLGFA), 251 to 271 (LYMGATAALGAGFLWLAFGIW), and 291 to 311 (ILYLFLIFSLLLVEKMLGLGG).

This sequence belongs to the UbiA prenyltransferase family. Protoheme IX farnesyltransferase subfamily.

The protein resides in the cell inner membrane. It carries out the reaction heme b + (2E,6E)-farnesyl diphosphate + H2O = Fe(II)-heme o + diphosphate. The protein operates within porphyrin-containing compound metabolism; heme O biosynthesis; heme O from protoheme: step 1/1. In terms of biological role, converts heme B (protoheme IX) to heme O by substitution of the vinyl group on carbon 2 of heme B porphyrin ring with a hydroxyethyl farnesyl side group. The sequence is that of Protoheme IX farnesyltransferase from Parvibaculum lavamentivorans (strain DS-1 / DSM 13023 / NCIMB 13966).